Here is a 155-residue protein sequence, read N- to C-terminus: MVAVKTMVEGGKATTGPPLGPALGPLGLNLGQVVKDINEKTKNFAGMQVPVTVNVIDPATKKYEIIVGVPPTSALLKKELGIEKGASKKKEKIAGNATLEQIKKVAESKRSALLSYNMKGAVLEVLGSAVSLGITVDGRDPKEVQKMIKNGEIEI.

Belongs to the universal ribosomal protein uL11 family. As to quaternary structure, part of the ribosomal stalk of the 50S ribosomal subunit. Interacts with L10 and the large rRNA to form the base of the stalk. L10 forms an elongated spine to which L12 dimers bind in a sequential fashion forming a multimeric L10(L12)X complex.

Forms part of the ribosomal stalk which helps the ribosome interact with GTP-bound translation factors. This Picrophilus torridus (strain ATCC 700027 / DSM 9790 / JCM 10055 / NBRC 100828 / KAW 2/3) protein is Large ribosomal subunit protein uL11.